Reading from the N-terminus, the 185-residue chain is Ribosome-recycling factor (185 aa).

Belongs to the RRF family.

The protein resides in the cytoplasm. Functionally, responsible for the release of ribosomes from messenger RNA at the termination of protein biosynthesis. May increase the efficiency of translation by recycling ribosomes from one round of translation to another. In Shewanella sp. (strain W3-18-1), this protein is Ribosome-recycling factor.